Reading from the N-terminus, the 483-residue chain is UDP-N-acetylmuramoyl-L-alanyl-D-glutamate--2,6-diaminopimelate ligase 2 (483 aa).

S30 contributes to the UDP-N-acetyl-alpha-D-muramoyl-L-alanyl-D-glutamate binding site. 111-117 (GTNGKTT) provides a ligand contact to ATP. UDP-N-acetyl-alpha-D-muramoyl-L-alanyl-D-glutamate is bound by residues 156-157 (TT), T183, and R191. An N6-carboxylysine modification is found at K223. Meso-2,6-diaminopimelate contacts are provided by residues R380, 404-407 (DNPR), G456, and E460. The Meso-diaminopimelate recognition motif motif lies at 404–407 (DNPR).

This sequence belongs to the MurCDEF family. MurE subfamily. Requires Mg(2+) as cofactor. Post-translationally, carboxylation is probably crucial for Mg(2+) binding and, consequently, for the gamma-phosphate positioning of ATP.

Its subcellular location is the cytoplasm. It catalyses the reaction UDP-N-acetyl-alpha-D-muramoyl-L-alanyl-D-glutamate + meso-2,6-diaminopimelate + ATP = UDP-N-acetyl-alpha-D-muramoyl-L-alanyl-gamma-D-glutamyl-meso-2,6-diaminopimelate + ADP + phosphate + H(+). The protein operates within cell wall biogenesis; peptidoglycan biosynthesis. In terms of biological role, catalyzes the addition of meso-diaminopimelic acid to the nucleotide precursor UDP-N-acetylmuramoyl-L-alanyl-D-glutamate (UMAG) in the biosynthesis of bacterial cell-wall peptidoglycan. The chain is UDP-N-acetylmuramoyl-L-alanyl-D-glutamate--2,6-diaminopimelate ligase 2 from Clostridium acetobutylicum (strain ATCC 824 / DSM 792 / JCM 1419 / IAM 19013 / LMG 5710 / NBRC 13948 / NRRL B-527 / VKM B-1787 / 2291 / W).